Here is a 1678-residue protein sequence, read N- to C-terminus: Clathrin heavy chain (1678 aa).

WD40-like repeat regions lie at residues 24–67 (SFSF…RPIS), 68–107 (ADSA…MNED), 108–149 (VVFW…SSLN), 150–195 (GCQI…QAIE), 196–257 (GHAA…PEAQ), 258–301 (NDFP…ISAD), and 302–330 (TIFV…VTVD). 7 CHCR repeats span residues 538-684 (VAEE…QICV), 687-829 (ATKY…SEDI), 834-973 (ILVV…QLID), 980-1125 (LSET…VKEA), 1129-1270 (YIKA…FRLA), 1275-1421 (LHIV…LLLN), and 1424-1567 (LLVL…YDCF). Residues 1334-1643 (REHLELFWSR…IQMEPQLMIT (310 aa)) are involved in binding clathrin light chain. Positions 1552 to 1677 (EELLGWFLER…AGGRNMGYPY (126 aa)) are trimerization.

The protein belongs to the clathrin heavy chain family. Clathrin triskelions, composed of 3 heavy chains and 3 light chains, are the basic subunits of the clathrin coat. Interacts with sau.

It localises to the cytoplasmic vesicle membrane. It is found in the membrane. Its subcellular location is the coated pit. Clathrin is the major protein of the polyhedral coat of coated pits and vesicles. In Drosophila melanogaster (Fruit fly), this protein is Clathrin heavy chain (Chc).